Consider the following 387-residue polypeptide: Patatin-01 (387 aa).

Positions 1 to 23 (MATTKSFLILSVMILATTSSTFA) are cleaved as a signal peptide. Residues 32-230 (LSIDGGGIKG…TVADPALLSV (199 aa)) enclose the PNPLA domain. Positions 36–41 (GGGIKG) match the GXGXXG motif. A GXSXG motif is present at residues 75-79 (GTSTG). The active-site Nucleophile is Ser-77. A glycan (N-linked (GlcNAc...) asparagine) is linked at Asn-115. Asp-216 (proton acceptor) is an active-site residue. The DGA/G signature appears at 216–218 (DGA). Residues 361–385 (ETYEEALKRFAKLLSDRKKLRANKA) are a coiled coil.

The protein belongs to the patatin family. Tuber.

It is found in the vacuole. Functionally, probable lipolytic acyl hydrolase (LAH), an activity which is thought to be involved in the response of tubers to pathogens. In Solanum tuberosum (Potato), this protein is Patatin-01.